Reading from the N-terminus, the 319-residue chain is Phospho-N-acetylmuramoyl-pentapeptide-transferase (319 aa).

10 helical membrane-spanning segments follow: residues 1-21, 53-73, 77-97, 117-137, 140-160, 172-192, 195-215, 221-241, 249-269, and 298-318; these read MSIL…FLLM, TMGG…VGAW, LNGT…IGMW, FLAQ…EGFQ, FGLT…MVGF, GLVT…ALVQ, TEVA…FPFN, IFMG…VALV, LIIG…VAYF, and GVFW…ILFL.

This sequence belongs to the glycosyltransferase 4 family. MraY subfamily. Mg(2+) serves as cofactor.

Its subcellular location is the cell membrane. The enzyme catalyses UDP-N-acetyl-alpha-D-muramoyl-L-alanyl-gamma-D-glutamyl-L-lysyl-D-alanyl-D-alanine + di-trans,octa-cis-undecaprenyl phosphate = Mur2Ac(oyl-L-Ala-gamma-D-Glu-L-Lys-D-Ala-D-Ala)-di-trans,octa-cis-undecaprenyl diphosphate + UMP. Its pathway is cell wall biogenesis; peptidoglycan biosynthesis. Catalyzes the initial step of the lipid cycle reactions in the biosynthesis of the cell wall peptidoglycan: transfers peptidoglycan precursor phospho-MurNAc-pentapeptide from UDP-MurNAc-pentapeptide onto the lipid carrier undecaprenyl phosphate, yielding undecaprenyl-pyrophosphoryl-MurNAc-pentapeptide, known as lipid I. This is Phospho-N-acetylmuramoyl-pentapeptide-transferase from Limosilactobacillus fermentum (strain NBRC 3956 / LMG 18251) (Lactobacillus fermentum).